The following is a 138-amino-acid chain: Glia maturation factor (138 aa).

An ADF-H domain is found at 3-138 (DNQICDISNE…TEEWLKAKLK (136 aa)).

This sequence belongs to the actin-binding proteins ADF family. GMF subfamily. In ovaries, expressed in follicular epithelium, in polar cells, migrating border cells, and centripedal cells (at protein level).

Its subcellular location is the cell projection. It is found in the lamellipodium. The protein localises to the cytoplasm. The protein resides in the perinuclear region. It localises to the nucleus. Its subcellular location is the cell cortex. Its function is as follows. Inhibits Arp2/3-mediated actin nucleation. Together with flr, promotes Arp2/3-nucleated actin filament array disassembly. Promotes debranching. Regulates lamellipodial protrusion dynamics possibly by facilitating lamellipodial retraction. In egg chambers, enhances the retraction dynamics of cellular extensions in border cells and thus together with flr plays an important role in directional migration of border cell clusters. In Drosophila melanogaster (Fruit fly), this protein is Glia maturation factor.